The sequence spans 192 residues: uncharacterized protein (192 aa).

The region spanning 29–160 (HRQAAVLIPI…PLDIYRRGDS (132 aa)) is the Nudix hydrolase domain. Residues 67 to 89 (GAVDDTDASAIAAALREAEEEVA) carry the Nudix box motif. Positions 83 and 87 each coordinate Mg(2+).

This sequence belongs to the Nudix hydrolase family. PCD1 subfamily. The cofactor is Mn(2+). Mg(2+) is required as a cofactor.

Its function is as follows. Probably mediates the hydrolysis of some nucleoside diphosphate derivatives. This is an uncharacterized protein from Escherichia coli (strain K12).